The chain runs to 383 residues: MKEADLITLRRQLHQIPELALQEKETHALLLKTIQGLPQTYFTIRTLPDLPTALLVKVQGRDPQRTIGYRTDIDALPVTEKTGLPFASKHSGIAHACGHDIHMTVALGILSYFAEHQPKDNLIFFFQPAEESKNGGKLAYDMGAFTGDWHIDEFYGLHDRPDLPAGTISTRLGTLFAGTTEINVDLIGKSGHAALPQNANDMIVAAASFISQIQTVVARNVGPTDSAVITFGLMRAGTIRNVIAGRAHLEGTLRGFTQQQIDFLQQRIRDIGQGIAASFNCQVKVALNQGGYYPVENNDKLTKNFIQVMKDDPDVTFVDTKPVMTGEDFGYLLNKIPGTMFWLGVNDPDSQLHAADFSPDEAALVPGVTAVVHFLEHRMLEKV.

Asp-72 is an active-site residue. Glu-131 serves as the catalytic Proton acceptor.

It belongs to the peptidase M20A family. N-acetyldiaminopimelate deacetylase subfamily.

It catalyses the reaction N-acetyl-(2S,6S)-2,6-diaminopimelate + H2O = (2S,6S)-2,6-diaminopimelate + acetate. It functions in the pathway amino-acid biosynthesis; L-lysine biosynthesis via DAP pathway; LL-2,6-diaminopimelate from (S)-tetrahydrodipicolinate (acetylase route): step 3/3. Catalyzes the conversion of N-acetyl-diaminopimelate to diaminopimelate and acetate. This Lacticaseibacillus paracasei (strain ATCC 334 / BCRC 17002 / CCUG 31169 / CIP 107868 / KCTC 3260 / NRRL B-441) (Lactobacillus paracasei) protein is N-acetyldiaminopimelate deacetylase.